The chain runs to 242 residues: 7-cyano-7-deazaguanine synthase (242 aa).

The tract at residues 1-25 (MNSRKDKNSKGKNSDTKRKKSSQEN) is disordered. 32–42 (LSGGLDSTTCL) serves as a coordination point for ATP. Residues Cys212, Cys221, Cys224, and Cys227 each coordinate Zn(2+).

This sequence belongs to the QueC family. Zn(2+) serves as cofactor.

It carries out the reaction 7-carboxy-7-deazaguanine + NH4(+) + ATP = 7-cyano-7-deazaguanine + ADP + phosphate + H2O + H(+). Its pathway is purine metabolism; 7-cyano-7-deazaguanine biosynthesis. Its function is as follows. Catalyzes the ATP-dependent conversion of 7-carboxy-7-deazaguanine (CDG) to 7-cyano-7-deazaguanine (preQ(0)). This Leptospira borgpetersenii serovar Hardjo-bovis (strain JB197) protein is 7-cyano-7-deazaguanine synthase.